The following is a 178-amino-acid chain: Ribosome maturation factor RimP (178 aa).

This sequence belongs to the RimP family.

The protein resides in the cytoplasm. Its function is as follows. Required for maturation of 30S ribosomal subunits. The protein is Ribosome maturation factor RimP of Mycobacterium avium (strain 104).